A 431-amino-acid chain; its full sequence is UDP-N-acetylglucosamine 1-carboxyvinyltransferase (431 aa).

22-23 provides a ligand contact to phosphoenolpyruvate; it reads KN. Arginine 93 serves as a coordination point for UDP-N-acetyl-alpha-D-glucosamine. The active-site Proton donor is cysteine 117. Cysteine 117 is subject to 2-(S-cysteinyl)pyruvic acid O-phosphothioketal. Residues aspartate 307 and valine 329 each coordinate UDP-N-acetyl-alpha-D-glucosamine.

The protein belongs to the EPSP synthase family. MurA subfamily.

Its subcellular location is the cytoplasm. It catalyses the reaction phosphoenolpyruvate + UDP-N-acetyl-alpha-D-glucosamine = UDP-N-acetyl-3-O-(1-carboxyvinyl)-alpha-D-glucosamine + phosphate. It participates in cell wall biogenesis; peptidoglycan biosynthesis. In terms of biological role, cell wall formation. Adds enolpyruvyl to UDP-N-acetylglucosamine. This is UDP-N-acetylglucosamine 1-carboxyvinyltransferase from Nitrosococcus oceani (strain ATCC 19707 / BCRC 17464 / JCM 30415 / NCIMB 11848 / C-107).